The primary structure comprises 274 residues: MQFSKMHGLGNDFMVVDAVTQNVYFSPELIRRLADRHLGVGFDQLLVVEPPYDPELDFHYRIFNADGSEVAQCGNGARCFARFVRLKGLTNKRDIRVSTQTGRMVLSVTDDDLVCVNMGEPNFDPQTVPFRATKEEKTYIMRAAEHTVLCGVVSMGNPHCVLQVDDVKTAKVELLGPVLEGHERFPERANIGFMQIVSREHIKLRVYERGAGETQACGSGACAAVAVGIQQELLSEEVHVELPGGSLHIRWKGPGSPLFMTGPATHVYDGFIHL.

The substrate site is built by N11, Q44, and N64. Residue C73 is the Proton donor of the active site. Residues 74–75 (GN), N157, N190, and 208–209 (ER) each bind substrate. Catalysis depends on C217, which acts as the Proton acceptor. 218–219 (GS) provides a ligand contact to substrate.

Belongs to the diaminopimelate epimerase family. In terms of assembly, homodimer.

It localises to the cytoplasm. It catalyses the reaction (2S,6S)-2,6-diaminopimelate = meso-2,6-diaminopimelate. It participates in amino-acid biosynthesis; L-lysine biosynthesis via DAP pathway; DL-2,6-diaminopimelate from LL-2,6-diaminopimelate: step 1/1. Its function is as follows. Catalyzes the stereoinversion of LL-2,6-diaminopimelate (L,L-DAP) to meso-diaminopimelate (meso-DAP), a precursor of L-lysine and an essential component of the bacterial peptidoglycan. This chain is Diaminopimelate epimerase, found in Serratia proteamaculans (strain 568).